A 132-amino-acid polypeptide reads, in one-letter code: Small ribosomal subunit protein uS8 (132 aa).

Belongs to the universal ribosomal protein uS8 family. As to quaternary structure, part of the 30S ribosomal subunit. Contacts proteins S5 and S12.

One of the primary rRNA binding proteins, it binds directly to 16S rRNA central domain where it helps coordinate assembly of the platform of the 30S subunit. This Rickettsia conorii (strain ATCC VR-613 / Malish 7) protein is Small ribosomal subunit protein uS8.